A 279-amino-acid chain; its full sequence is MPIPLLSFPLTTQNQRVEGYEVPNEDTPTIYRLTDTSSDTEIDAIIWAAYRQIFSEHLILETYRQPYLESQLRNRAINVRDFIRGLGKSEVYRQEVAQTNSNYRLVDISFKRFLGRATYGKSEQIAWSIVIATQGLHGFIDALVDSEEYRQNFGDDIVPFQRRRFKDRPFNLVNPRYADYWRNRLLEQFLGGQSFYRVVRAGESGKRGVAGAIPSTFLSMAASIAPSGISYQRTADSARTFISTVKLPETTSESKTPPPTVKPATVALPYRYIPGNKTT.

In terms of domain architecture, PBS-linker spans 11-189; it reads TTQNQRVEGY…YWRNRLLEQF (179 aa).

It belongs to the phycobilisome linker protein family. The phycobilisome is a hemidiscoidal structure that is composed of two distinct substructures: a core complex and a number of rods radiating from the core.

Its subcellular location is the cellular thylakoid membrane. Rod-core linker protein required for attachment of phycocyanin to allophycocyanin in cores of phycobilisomes. Functionally, linker polypeptides determine the state of aggregation and the location of the disk-shaped phycobiliprotein units within the phycobilisome and modulate their spectroscopic properties in order to mediate a directed and optimal energy transfer. The chain is Phycobilisome rod-core linker polypeptide CpcG1 (cpcG1) from Mastigocladus laminosus (Fischerella sp.).